Reading from the N-terminus, the 345-residue chain is Centromere protein L (345 aa).

A phosphoserine mark is found at serine 40 and serine 54.

This sequence belongs to the CENP-L/IML3 family. As to quaternary structure, component of the CENPA-CAD complex, composed of CENPI, CENPK, CENPL, CENPO, CENPP, CENPQ, CENPR and CENPS. The CENPA-CAD complex interacts with the CENPA-NAC complex, at least composed of CENPA, CENPC, CENPH, CENPM, CENPN, CENPT and CENPU.

The protein localises to the nucleus. The protein resides in the chromosome. It is found in the centromere. Functionally, component of the CENPA-CAD (nucleosome distal) complex, a complex recruited to centromeres which is involved in assembly of kinetochore proteins, mitotic progression and chromosome segregation. May be involved in incorporation of newly synthesized CENPA into centromeres via its interaction with the CENPA-NAC complex. The chain is Centromere protein L (Cenpl) from Rattus norvegicus (Rat).